Consider the following 567-residue polypeptide: MASEQSSPEINADNLNSSAADVHVQPPGEKEWSDGFYDKEVINGNTPDAPKRGFLGYLIIYLLCYPVSFGGFLPGWDSGITAGFINMDNFKMNFGSYKHSTGEYYLSNVRMGLLVAMFSVGCSIGGVAFARLADTLGRRLAIVIVVLVYMVGAIIQISSNHKWYQYFVGKIIYGLGAGGCSVLCPMLLSEIAPTDLRGGLVSLYQLNMTFGIFLGYCSVYGTRKYSNTAQWRIPVGLCFLWALIIIVGMLLVPESPRYLIECERHEEACVSIAKIDKVSPEDPWVLKQADEINAGVLAQRELGEASWKELFSVKTKVLQRLITGILVQTFLQLTGENYFFFYGTTIFKSVGLTDGFETSIVLGTVNFFSTIIAVMVVDKIGRRKCLLFGAASMMACMVIFASIGVKCLYPHGQDGPSSKGAGNAMIVFTCFYIFCFATTWAPVAYIVVAESFPSKVKSKAMSISTAFNWLWQFLIGFFTPFITGSIHFYYGYVFVGCLVAMFLYVFFFLPETIGLSLEETQLLYEEGIKPWKSASWVPPSRRGASSRETEAKKKSWKEVLKFPKSFN.

Residues 1–19 (MASEQSSPEINADNLNSSA) are compositionally biased toward polar residues. Residues 1–32 (MASEQSSPEINADNLNSSAADVHVQPPGEKEW) form a disordered region. Topologically, residues 1–55 (MASEQSSPEINADNLNSSAADVHVQPPGEKEWSDGFYDKEVINGNTPDAPKRGFL) are cytoplasmic. Residues 56 to 76 (GYLIIYLLCYPVSFGGFLPGW) traverse the membrane as a helical segment. At 77 to 112 (DSGITAGFINMDNFKMNFGSYKHSTGEYYLSNVRMG) the chain is on the extracellular side. Residues 113–133 (LLVAMFSVGCSIGGVAFARLA) traverse the membrane as a helical segment. Topologically, residues 134 to 139 (DTLGRR) are cytoplasmic. The chain crosses the membrane as a helical span at residues 140-160 (LAIVIVVLVYMVGAIIQISSN). Residues 161-170 (HKWYQYFVGK) lie on the Extracellular side of the membrane. A helical membrane pass occupies residues 171 to 191 (IIYGLGAGGCSVLCPMLLSEI). Over 192–197 (APTDLR) the chain is Cytoplasmic. The chain crosses the membrane as a helical span at residues 198–218 (GGLVSLYQLNMTFGIFLGYCS). Over 219–232 (VYGTRKYSNTAQWR) the chain is Extracellular. Residues 233 to 253 (IPVGLCFLWALIIIVGMLLVP) form a helical membrane-spanning segment. At 254 to 336 (ESPRYLIECE…VQTFLQLTGE (83 aa)) the chain is on the cytoplasmic side. Residues 337–353 (NYFFFYGTTIFKSVGLT) traverse the membrane as a helical segment. Over 354–359 (DGFETS) the chain is Extracellular. Residues 360–377 (IVLGTVNFFSTIIAVMVV) traverse the membrane as a helical segment. The Cytoplasmic segment spans residues 378–384 (DKIGRRK). Residues 385–405 (CLLFGAASMMACMVIFASIGV) traverse the membrane as a helical segment. The Extracellular segment spans residues 406–427 (KCLYPHGQDGPSSKGAGNAMIV). A helical transmembrane segment spans residues 428-448 (FTCFYIFCFATTWAPVAYIVV). The Cytoplasmic portion of the chain corresponds to 449-465 (AESFPSKVKSKAMSIST). Residues 466–486 (AFNWLWQFLIGFFTPFITGSI) form a helical membrane-spanning segment. His-487 is a topological domain (extracellular). Residues 488–508 (FYYGYVFVGCLVAMFLYVFFF) form a helical membrane-spanning segment. At 509–567 (LPETIGLSLEETQLLYEEGIKPWKSASWVPPSRRGASSRETEAKKKSWKEVLKFPKSFN) the chain is on the cytoplasmic side. The disordered stretch occupies residues 533–555 (SASWVPPSRRGASSRETEAKKKS). Residues 545-555 (SSRETEAKKKS) show a composition bias toward basic and acidic residues.

It belongs to the major facilitator superfamily. Sugar transporter (TC 2.A.1.1) family.

The protein localises to the membrane. Its function is as follows. Probable glucose transporter. This is Hexose transporter HXT16 (HXT16) from Saccharomyces cerevisiae (strain ATCC 204508 / S288c) (Baker's yeast).